Here is a 282-residue protein sequence, read N- to C-terminus: Protein NEOXANTHIN-DEFICIENT 1 (282 aa).

Its function is as follows. Required for neoxanthin biosynthesis. Probably not involved directly in the enzymatic conversion of violaxanthin to neoxanthin. Is necessary but not sufficient for neoxanthin synthesis. The polypeptide is Protein NEOXANTHIN-DEFICIENT 1 (Arabidopsis thaliana (Mouse-ear cress)).